The following is a 274-amino-acid chain: MAIVKCKPTSPGRRFVVKVVNKELHKGAPHAPLIEKKSKSGGRNNNGRITTRHVGGGHKQHYRLVDFRRNDKDGIPATVERIEYDPNRTAHIALLCYADGERRYIIAPKGVSAGDQLIAGALAPIKAGNSLQLRNIPVGSTIHGIELKPGKGAQIARSAGASAQLIAREGVYVTLRLRSGEMRKVLAECRATLGEVSNSEHSLRSLGKAGAKRWRGVRPTVRGVAMNPVDHPHGGGEGRTSGGRHPVSPWGFPTKGAKTRGNKRTDNMIVRRRK.

Disordered regions lie at residues 28-55 (APHA…RHVG) and 224-274 (VAMN…RRRK).

This sequence belongs to the universal ribosomal protein uL2 family. As to quaternary structure, part of the 50S ribosomal subunit. Forms a bridge to the 30S subunit in the 70S ribosome.

Its function is as follows. One of the primary rRNA binding proteins. Required for association of the 30S and 50S subunits to form the 70S ribosome, for tRNA binding and peptide bond formation. It has been suggested to have peptidyltransferase activity; this is somewhat controversial. Makes several contacts with the 16S rRNA in the 70S ribosome. In Pseudomonas putida (strain ATCC 47054 / DSM 6125 / CFBP 8728 / NCIMB 11950 / KT2440), this protein is Large ribosomal subunit protein uL2.